Here is a 301-residue protein sequence, read N- to C-terminus: Ribonuclease Z (301 aa).

Zn(2+)-binding residues include H63, H65, D67, H68, H141, D204, and H262. D67 functions as the Proton acceptor in the catalytic mechanism.

Belongs to the RNase Z family. As to quaternary structure, homodimer. Requires Zn(2+) as cofactor.

It catalyses the reaction Endonucleolytic cleavage of RNA, removing extra 3' nucleotides from tRNA precursor, generating 3' termini of tRNAs. A 3'-hydroxy group is left at the tRNA terminus and a 5'-phosphoryl group is left at the trailer molecule.. In terms of biological role, zinc phosphodiesterase, which displays some tRNA 3'-processing endonuclease activity. Probably involved in tRNA maturation, by removing a 3'-trailer from precursor tRNA. The protein is Ribonuclease Z of Streptomyces avermitilis (strain ATCC 31267 / DSM 46492 / JCM 5070 / NBRC 14893 / NCIMB 12804 / NRRL 8165 / MA-4680).